The primary structure comprises 195 residues: Phosphoheptose isomerase (195 aa).

One can recognise an SIS domain in the interval 37 to 195 (ISDSFKQHGK…IEFEMAKIRQ (159 aa)). Substrate is bound at residue 52-54 (NGG). 2 residues coordinate Zn(2+): His-61 and Glu-65. Substrate contacts are provided by residues Glu-65, 93-94 (ND), 119-121 (STS), Ser-124, and Gln-172. Gln-172 and His-180 together coordinate Zn(2+).

The protein belongs to the SIS family. GmhA subfamily. As to quaternary structure, homotetramer. The cofactor is Zn(2+).

The protein localises to the cytoplasm. The enzyme catalyses 2 D-sedoheptulose 7-phosphate = D-glycero-alpha-D-manno-heptose 7-phosphate + D-glycero-beta-D-manno-heptose 7-phosphate. Its pathway is carbohydrate biosynthesis; D-glycero-D-manno-heptose 7-phosphate biosynthesis; D-glycero-alpha-D-manno-heptose 7-phosphate and D-glycero-beta-D-manno-heptose 7-phosphate from sedoheptulose 7-phosphate: step 1/1. Its function is as follows. Catalyzes the isomerization of sedoheptulose 7-phosphate in D-glycero-D-manno-heptose 7-phosphate. This chain is Phosphoheptose isomerase, found in Histophilus somni (strain 2336) (Haemophilus somnus).